The following is a 1943-amino-acid chain: Cadherin-86C (1943 aa).

Residues 1–102 (MASTSSSQPE…QNQQMQHHWP (102 aa)) are disordered. The Extracellular portion of the chain corresponds to 1–934 (MASTSSSQPE…TDTQYKAENK (934 aa)). The N-linked (GlcNAc...) asparagine glycan is linked to asparagine 12. Over residues 50–89 (PHHHHHHHHQHHHHHRLKQHHRHHHHHHRLQHHHHHHQQQ) the composition is skewed to basic residues. Residues 90 to 100 (HNHQNQQMQHH) are compositionally biased toward low complexity. 5 Cadherin domains span residues 238–366 (CSIT…PPVF), 367–483 (TSAP…PPYF), 484–600 (ENDH…APVF), 601–708 (EQPA…TPIF), and 709–832 (DKDL…SVKF). Residues asparagine 244, asparagine 419, asparagine 531, asparagine 579, asparagine 585, asparagine 612, and asparagine 645 are each glycosylated (N-linked (GlcNAc...) asparagine). Residue asparagine 912 is glycosylated (N-linked (GlcNAc...) asparagine). Residues 935 to 955 (VLFWLLILLATLVALTILILL) form a helical membrane-spanning segment. At 956–1943 (LCCICSWCPL…NSGGESPQYS (988 aa)) the chain is on the cytoplasmic side. Disordered regions lie at residues 1038-1058 (DVGRGQDIGEGDRRHIQSAEE), 1390-1442 (KPSR…RKRI), 1458-1516 (EEEE…SHNR), 1546-1695 (YKHS…ERNV), and 1707-1895 (KSSV…DDHD). The span at 1047 to 1058 (EGDRRHIQSAEE) shows a compositional bias: basic and acidic residues. Over residues 1426–1442 (IKRRRTKKRPRQPRKRI) the composition is skewed to basic residues. Composition is skewed to basic and acidic residues over residues 1486–1497 (QLSDESRKDQSR) and 1507–1516 (HRSESDSHNR). The segment covering 1552-1568 (DFDEDDTEYSIDSDGDE) has biased composition (acidic residues). The span at 1580-1602 (QENERYRRQERTYAEPENPVDRK) shows a compositional bias: basic and acidic residues. Positions 1633 to 1667 (KQTSSEPPHNRVSISKYESTVTENGRKLMSTSTEI) are enriched in polar residues. Low complexity predominate over residues 1709–1724 (SVSGRTSTESSKSQPS). Basic and acidic residues-rich tracts occupy residues 1754–1764 (TGGRYKPEPAP), 1774–1793 (LLKEDRALNKQHKPKIETDT), 1800–1810 (HSEHRFERENA), and 1837–1863 (KESKSGRESKTSKEAKPKPSPIRENEV). The segment covering 1879 to 1889 (HPTQKQLNAST) has biased composition (polar residues).

As to expression, as cell intercalation proceeds, a row of stigmatophore cells surrounding the spiracular chamber show expression of Cad86C. Expression is regulated by the Abd-B cascade, requiring sal. Expressed in a broad region of the morphogenetic furrow and in clusters of cells posterior to the morphogenetic furrow. Weakly expressed in the epithelium of wing imaginal disks. In eye imaginal disk cells within the morphogenetic furrow, expression is localized to the apical region.

The protein localises to the cell membrane. In terms of biological role, cadherins are calcium-dependent cell adhesion proteins. They preferentially interact with themselves in a homophilic manner in connecting cells. This chain is Cadherin-86C (Cad86C), found in Drosophila melanogaster (Fruit fly).